Here is a 290-residue protein sequence, read N- to C-terminus: Pyridoxal kinase PdxY (290 aa).

Substrate is bound by residues Ser12 and 47-48; that span reads TQ. ATP-binding positions include Asp114, Glu151, Lys184, and 211-214; that span reads RPLL. A substrate-binding site is contributed by Asp225.

The protein belongs to the pyridoxine kinase family. PdxY subfamily. Homodimer. Mg(2+) serves as cofactor.

The enzyme catalyses pyridoxal + ATP = pyridoxal 5'-phosphate + ADP + H(+). It participates in cofactor metabolism; pyridoxal 5'-phosphate salvage; pyridoxal 5'-phosphate from pyridoxal: step 1/1. Its function is as follows. Pyridoxal kinase involved in the salvage pathway of pyridoxal 5'-phosphate (PLP). Catalyzes the phosphorylation of pyridoxal to PLP. This Pseudomonas putida (strain GB-1) protein is Pyridoxal kinase PdxY.